Consider the following 407-residue polypeptide: Keratin, type I cuticular Ha2 (407 aa).

A head region spans residues 1 to 55; that stretch reads MPSVCMPTTYRPASCLSKTYLSSSCQPSNRRPTGCISSSMGTYGLFCEGAFNGNE. Residues 55 to 366 form the IF rod domain; that stretch reads EKETMQVLND…GLLESEDSKL (312 aa). Positions 56–90 are coil 1A; it reads KETMQVLNDRLANYLEKVRQLEKENAELEGKIQDV. The segment at 91-101 is linker 1; it reads YQGQVLTMCPD. The coil 1B stretch occupies residues 102 to 202; the sequence is YQSYFQTIEE…HEEEVGVLRQ (101 aa). The linker 12 stretch occupies residues 203 to 218; the sequence is QLGDRLNIEVDAAPPV. A coil 2 region spans residues 219-362; sequence DLTRMLEEMR…DTYRGLLESE (144 aa). The segment at 363-407 is tail; that stretch reads DSKLPCNPCSTPSCQPCAPSPGVSRTVCVPHTVCVPCSPCLQTRY.

It belongs to the intermediate filament family. In terms of tissue distribution, cuticle of the hair shaft.

This Mus musculus (Mouse) protein is Keratin, type I cuticular Ha2 (Krt32).